Here is a 226-residue protein sequence, read N- to C-terminus: Charged multivesicular body protein 5 (226 aa).

Residues 21 to 93 (IAGVDARATN…NQSFNMEQAN (73 aa)) adopt a coiled-coil conformation. Residues 188–198 (KAPEAPSREPG) show a composition bias toward basic and acidic residues. Residues 188–226 (KAPEAPSREPGADSIVPGKSTIETDEFGLPKIPTSLKTT) are disordered. Position 201 is a phosphoserine (S201). Position 226 is a phosphothreonine (T226).

The protein belongs to the SNF7 family. As to quaternary structure, probable peripherally associated component of the endosomal sorting required for transport complex III (ESCRT-III).

It localises to the endosome membrane. Functionally, probable peripherally associated component of the endosomal sorting required for transport complex III (ESCRT-III) which is involved in multivesicular bodies (MVBs) formation and sorting of endosomal cargo proteins into MVBs. MVBs contain intraluminal vesicles (ILVs) that are generated by invagination and scission from the limiting membrane of the endosome and are delivered to lysosomes enabling degradation of membrane proteins. Specifically down-regulates Notch signaling activity in the germarium, probably by facilitating Notch endocytosis. This Drosophila melanogaster (Fruit fly) protein is Charged multivesicular body protein 5.